Consider the following 332-residue polypeptide: Caffeoylshikimate esterase (332 aa).

Over residues 1 to 13 the composition is skewed to low complexity; that stretch reads MPSEAESSANSAP. The disordered stretch occupies residues 1 to 26; the sequence is MPSEAESSANSAPATPPPPPNFWGTM. S147 serves as the catalytic Nucleophile. Active-site charge relay system residues include D268 and H298.

Belongs to the AB hydrolase superfamily. Monoacylglycerol lipase family. Interacts with ACBP2. In terms of tissue distribution, expressed in vasculature of roots and leaves, stems, flowers and siliques.

It is found in the cell membrane. The catalysed reaction is 5-O-[(E)-caffeoyl]-shikimate + H2O = shikimate + (E)-caffeate + H(+). Its function is as follows. Esterase involved in the biosynthesis of lignin. Hydrolyzes caffeoylshikimate into caffeate and shikimate. Together with 4-coumarate--CoA ligase (4CL), acts on an alternative reaction for the formation of caffeoyl-CoA and bypasses the second reaction of shikimate O-hydroxycinnamoyltransferase (HST). Also accepts 4-coumaroylshikimate as substrate, but with lower activity. According to PubMed:20345607 and PubMed:22915575, possesses monoacylglycerol O-acyltransferase, monoacylglycerol lipase and lysophospholipase activities in vitro. With the association of ACBP2, may promote the degradation of lysophosphatidylcholine and detoxify the peroxidized membrane in response to cadmium-induced oxidative stress. However these results require additional confirmation in vivo. In Arabidopsis thaliana (Mouse-ear cress), this protein is Caffeoylshikimate esterase (CSE).